A 595-amino-acid polypeptide reads, in one-letter code: Probable Xaa-Pro aminopeptidase CHGG_02942 (595 aa).

The segment at Lys51 to Val76 is disordered. The segment covering Ser52–Thr66 has biased composition (low complexity). Mn(2+)-binding residues include Asp334, Asp345, Glu541, and Glu563.

It belongs to the peptidase M24B family. It depends on Mn(2+) as a cofactor.

It carries out the reaction Release of any N-terminal amino acid, including proline, that is linked to proline, even from a dipeptide or tripeptide.. Functionally, catalyzes the removal of a penultimate prolyl residue from the N-termini of peptides. The sequence is that of Probable Xaa-Pro aminopeptidase CHGG_02942 from Chaetomium globosum (strain ATCC 6205 / CBS 148.51 / DSM 1962 / NBRC 6347 / NRRL 1970) (Soil fungus).